A 520-amino-acid polypeptide reads, in one-letter code: Cytochrome b5 reductase 4 (520 aa).

Methionine 1 carries the N-acetylmethionine modification. Positions 1–16 (MLNVPSQSFPGPSSQQ) are enriched in low complexity. Residues 1–27 (MLNVPSQSFPGPSSQQRVASGGRSKVP) form a disordered region. The 77-residue stretch at 54–130 (LIEVTEEELK…LKECLVGRMA (77 aa)) folds into the Cytochrome b5 heme-binding domain. Residues histidine 89 and histidine 112 each coordinate heme. The CS domain occupies 164–255 (PSSPSYDWFQ…KENTSWKCLG (92 aa)). In terms of domain architecture, FAD-binding FR-type spans 272–384 (LFYRKCQLVS…SNPEGNFIIS (113 aa)). FAD contacts are provided by residues 364–379 (DQLQ…NPEG) and 391–423 (DLFL…KVKL).

Belongs to the flavoprotein pyridine nucleotide cytochrome reductase family. FAD is required as a cofactor.

The protein resides in the endoplasmic reticulum. The catalysed reaction is 2 Fe(III)-[cytochrome b5] + NADH = 2 Fe(II)-[cytochrome b5] + NAD(+) + H(+). Functionally, NADH-cytochrome b5 reductase involved in endoplasmic reticulum stress response pathway. Plays a critical role in protecting pancreatic beta-cells against oxidant stress, possibly by protecting the cell from excess buildup of reactive oxygen species (ROS). The protein is Cytochrome b5 reductase 4 (CYB5R4) of Bos taurus (Bovine).